Reading from the N-terminus, the 120-residue chain is Anti-adapter protein IraM (120 aa).

The protein belongs to the IraM/RssC family.

It is found in the cytoplasm. Involved in the stabilization of the sigma stress factor RpoS. This chain is Anti-adapter protein IraM, found in Salmonella typhimurium (strain LT2 / SGSC1412 / ATCC 700720).